A 550-amino-acid chain; its full sequence is Tyrosinase HcTyr2 (550 aa).

The Cu cation site is built by H56, H84, H93, H282, H286, and H326.

Belongs to the tyrosinase family. Requires Cu(2+) as cofactor.

It carries out the reaction L-tyrosine + O2 = L-dopaquinone + H2O. It catalyses the reaction 2 L-tyrosine + O2 = 2 L-dopa. The enzyme catalyses 2 L-dopa + O2 = 2 L-dopaquinone + 2 H2O. Functionally, copper-containing oxidase that catalyzes the conversion of L-tyrosine to L-dopa and then to L-dopaquinone. Can use various phenols such as p-coumaric acid, phenol, pyrocatechol, syringol or pyrogallol. Accepts several of the constituents of lignin and potentially participates in lignin functionalization. This Hahella sp. (strain CCB-MM4) protein is Tyrosinase HcTyr2.